Consider the following 107-residue polypeptide: Integration host factor subunit beta (107 aa).

Residues 76–107 form a disordered region; the sequence is FVPHFKPGKELRERVDGRAGEPLKADDPDDER. Residues 82–101 are compositionally biased toward basic and acidic residues; it reads PGKELRERVDGRAGEPLKAD.

It belongs to the bacterial histone-like protein family. Heterodimer of an alpha and a beta chain.

This protein is one of the two subunits of integration host factor, a specific DNA-binding protein that functions in genetic recombination as well as in transcriptional and translational control. The sequence is that of Integration host factor subunit beta from Burkholderia cenocepacia (strain ATCC BAA-245 / DSM 16553 / LMG 16656 / NCTC 13227 / J2315 / CF5610) (Burkholderia cepacia (strain J2315)).